The chain runs to 391 residues: Cystathionine beta-lyase MetC (391 aa).

K196 carries the post-translational modification N6-(pyridoxal phosphate)lysine.

The protein belongs to the trans-sulfuration enzymes family. In terms of assembly, homotetramer. Pyridoxal 5'-phosphate is required as a cofactor.

It carries out the reaction L,L-cystathionine + H2O = L-homocysteine + pyruvate + NH4(+). The enzyme catalyses an S-substituted L-cysteine + H2O = a thiol + pyruvate + NH4(+). Its pathway is amino-acid biosynthesis; L-methionine biosynthesis via de novo pathway; L-homocysteine from L-cystathionine: step 1/1. With respect to regulation, cystathionine beta-lyase activity is inhibited by sweat components such as glycine, serine and ammonium sulfate. Inhibited by cystathionine at a concentration higher than 6 mM. Its function is as follows. Catalyzes the transformation of cystathionine into homocysteine. Can also catalyze, at low levels, the conversion of cystathionine into methionine and the conversion of methionine into methanethiol. The chain is Cystathionine beta-lyase MetC from Staphylococcus haemolyticus (strain JCSC1435).